The following is a 460-amino-acid chain: Diguanylate cyclase DosC (460 aa).

Histidine 98 contributes to the heme binding site. The region spanning 325 to 458 is the GGDEF domain; that stretch reads TPLSVLIIDV…GRNRVELWKA (134 aa). Aspartate 333 provides a ligand contact to Mg(2+). Asparagine 341 and aspartate 350 together coordinate substrate. Aspartate 376 contributes to the Mg(2+) binding site. Aspartate 376 acts as the Proton acceptor in catalysis.

Heme serves as cofactor. Mg(2+) is required as a cofactor.

The catalysed reaction is 2 GTP = 3',3'-c-di-GMP + 2 diphosphate. It participates in purine metabolism; 3',5'-cyclic di-GMP biosynthesis. In terms of biological role, globin-coupled heme-based oxygen sensor protein displaying diguanylate cyclase (DGC) activity in response to oxygen availability. Thus, catalyzes the synthesis of cyclic diguanylate (c-di-GMP) via the condensation of 2 GTP molecules. Cyclic-di-GMP is a second messenger which controls cell surface-associated traits in bacteria. This chain is Diguanylate cyclase DosC (dosC), found in Shigella boydii serotype 4 (strain Sb227).